We begin with the raw amino-acid sequence, 522 residues long: ATP synthase subunit alpha, mitochondrial (522 aa).

ATP is bound at residue 172–179 (GDRQTGKT).

Belongs to the ATPase alpha/beta chains family. As to quaternary structure, F-type ATPases have 2 components, CF(1) - the catalytic core - and CF(0) - the membrane proton channel. CF(1) has five subunits: alpha(3), beta(3), gamma(1), delta(1), epsilon(1). CF(0) has three main subunits: a, b and c.

The protein localises to the mitochondrion. It localises to the mitochondrion inner membrane. Its function is as follows. Mitochondrial membrane ATP synthase (F(1)F(0) ATP synthase or Complex V) produces ATP from ADP in the presence of a proton gradient across the membrane which is generated by electron transport complexes of the respiratory chain. F-type ATPases consist of two structural domains, F(1) - containing the extramembraneous catalytic core, and F(0) - containing the membrane proton channel, linked together by a central stalk and a peripheral stalk. During catalysis, ATP synthesis in the catalytic domain of F(1) is coupled via a rotary mechanism of the central stalk subunits to proton translocation. Subunits alpha and beta form the catalytic core in F(1). Rotation of the central stalk against the surrounding alpha(3)beta(3) subunits leads to hydrolysis of ATP in three separate catalytic sites on the beta subunits. Subunit alpha does not bear the catalytic high-affinity ATP-binding sites. This is ATP synthase subunit alpha, mitochondrial (ATP1) from Acanthamoeba castellanii (Amoeba).